The primary structure comprises 229 residues: Ribonuclease HII (229 aa).

The RNase H type-2 domain occupies 34–223 (WPVAGADEAG…LRKVEDGPQM (190 aa)). Positions 40, 41, and 131 each coordinate a divalent metal cation.

Belongs to the RNase HII family. The cofactor is Mn(2+). Mg(2+) is required as a cofactor.

The protein resides in the cytoplasm. The catalysed reaction is Endonucleolytic cleavage to 5'-phosphomonoester.. In terms of biological role, endonuclease that specifically degrades the RNA of RNA-DNA hybrids. In Rhizobium leguminosarum bv. trifolii (strain WSM2304), this protein is Ribonuclease HII.